Reading from the N-terminus, the 20-residue chain is Equinatoxin-1'' (20 aa).

Residues 3–12 are plays an important role in the hemolytic activity; that stretch reads AVAGAVIEGA. Residues 11-20 are N-terminal region; it reads GATLTFNVLQ.

Belongs to the actinoporin family. Sea anemone subfamily. In terms of assembly, octamer or nonamer in membranes. Monomer in the soluble state.

The protein localises to the secreted. It is found in the nematocyst. Its subcellular location is the target cell membrane. Its function is as follows. Pore-forming protein that forms cations-selective hydrophilic pores of around 1 nm and causes cardiac stimulation and cytolysis. Pore formation is a multi-step process that involves specific recognition of membrane sphingomyelin (but neither cholesterol nor phosphatidylcholine) using aromatic rich region and adjacent phosphocholine (POC) binding site, firm binding to the membrane (mainly driven by hydrophobic interactions) accompanied by the transfer of the N-terminal region to the lipid-water interface and finally pore formation after oligomerization of monomers. Cytolytic effects include red blood cells hemolysis, platelet aggregation and lysis, cytotoxic and cytostatic effects on fibroblasts. Lethality in mammals has been ascribed to severe vasospasm of coronary vessels, cardiac arrhythmia, and inotropic effects. The chain is Equinatoxin-1'' from Actinia equina (Beadlet anemone).